Reading from the N-terminus, the 1218-residue chain is MRSPRTRGRPGRPLSLLLALLCALRAKVCGASGQFELEILSMQNVNGELQNGNCCGGVRNPGDRKCTRDECDTYFKVCLKEYQSRVTAGGPCSFGSGSTPVIGGNTFNLKASRGNDRNRIVLPFSFAWPRSYTLLVEAWDSSNDTIQPDSIIEKASHSGMINPSRQWQTLKQNTGIAHFEYQIRVTCDDHYYGFGCNKFCRPRDDFFGHYACDQNGNKTCMEGWMGPDCNKAICRQGCSPKHGSCKLPGDCRCQYGWQGLYCDKCIPHPGCVHGTCNEPWQCLCETNWGGQLCDKDLNYCGTHQPCLNRGTCSNTGPDKYQCSCPEGYSGPNCEIAEHACLSDPCHNRGSCKETSSGFECECSPGWTGPTCSTNIDDCSPNNCSHGGTCQDLVNGFKCVCPPQWTGKTCQLDANECEAKPCVNARSCKNLIASYYCDCLPGWMGQNCDININDCLGQCQNDASCRDLVNGYRCICPPGYAGDHCERDIDECASNPCLNGGHCQNEINRFQCLCPTGFSGNLCQLDIDYCEPNPCQNGAQCYNRASDYFCKCPEDYEGKNCSHLKDHCRTTTCEVIDSCTVAMASNDTPEGVRYISSNVCGPHGKCKSQSGGKFTCDCNKGFTGTYCHENINDCESNPCKNGGTCIDGVNSYKCICSDGWEGAHCENNINDCSQNPCHYGGTCRDLVNDFYCDCKNGWKGKTCHSRDSQCDEATCNNGGTCYDEVDTFKCMCPGGWEGTTCNIARNSSCLPNPCHNGGTCVVNGDSFTCVCKEGWEGPICTQNTNDCSPHPCYNSGTCVDGDNWYRCECAPGFAGPDCRININECQSSPCAFGATCVDEINGYQCICPPGHSGAKCHEVSGRSCITMGRVILDGAKWDDDCNTCQCLNGRVACSKVWCGPRPCRLHKSHNECPSGQSCIPVLDDQCFVRPCTGVGECRSSSLQPVKTKCTSDSYYQDNCANITFTFNKEMMSPGLTTEHICSELRNLNILKNVSAEYSIYIACEPSLSANNEIHVAISAEDIRDDGNPVKEITDKIIDLVSKRDGNSSLIAAVAEVRVQRRPLKNRTDFLVPLLSSVLTVAWVCCLVTAFYWCVRKRRKPSSHTHSAPEDNTTNNVREQLNQIKNPIEKHGANTVPIKDYENKNSKMSKIRTHNSEVEEDDMDKHQQKVRFAKQPVYTLVDREEKAPSGTPTKHPNWTNKQDNRDLESAQSLNRMEYIV.

The signal sequence occupies residues 1–33 (MRSPRTRGRPGRPLSLLLALLCALRAKVCGASG). Residues 34–1067 (QFELEILSMQ…QRRPLKNRTD (1034 aa)) are Extracellular-facing. N-linked (GlcNAc...) asparagine glycosylation is present at Asn-143. One can recognise a DSL domain in the interval 185–229 (VTCDDHYYGFGCNKFCRPRDDFFGHYACDQNGNKTCMEGWMGPDC). 2 disulfides stabilise this stretch: Cys-187-Cys-196 and Cys-200-Cys-212. The interval 199 to 207 (FCRPRDDFF) is important for interaction with NOTCH1. Residue Asn-217 is glycosylated (N-linked (GlcNAc...) asparagine). Disulfide bonds link Cys-220-Cys-229, Cys-234-Cys-245, Cys-238-Cys-251, Cys-253-Cys-262, Cys-265-Cys-276, Cys-271-Cys-282, Cys-284-Cys-293, Cys-300-Cys-312, Cys-306-Cys-322, Cys-324-Cys-333, Cys-340-Cys-351, Cys-345-Cys-360, Cys-362-Cys-371, Cys-378-Cys-389, Cys-383-Cys-398, Cys-400-Cys-409, Cys-416-Cys-427, Cys-421-Cys-436, Cys-438-Cys-447, Cys-454-Cys-464, Cys-458-Cys-473, Cys-475-Cys-484, Cys-491-Cys-502, Cys-496-Cys-511, Cys-513-Cys-522, Cys-529-Cys-540, Cys-534-Cys-549, Cys-551-Cys-560, Cys-578-Cys-605, Cys-599-Cys-615, Cys-617-Cys-626, Cys-633-Cys-644, Cys-638-Cys-653, Cys-655-Cys-664, Cys-671-Cys-682, Cys-676-Cys-691, Cys-693-Cys-702, Cys-709-Cys-720, Cys-714-Cys-729, and Cys-731-Cys-740. In terms of domain architecture, EGF-like 1 spans 230–263 (NKAICRQGCSPKHGSCKLPGDCRCQYGWQGLYCD). The region spanning 264–294 (KCIPHPGCVHGTCNEPWQCLCETNWGGQLCD) is the EGF-like 2; atypical domain. EGF-like domains follow at residues 296 to 334 (DLNY…PNCE) and 336 to 372 (AEHA…PTCS). The EGF-like 5; calcium-binding domain maps to 374–410 (NIDDCSPNNCSHGGTCQDLVNGFKCVCPPQWTGKTCQ). N-linked (GlcNAc...) asparagine glycosylation is present at Asn-382. Residues 412-448 (DANECEAKPCVNARSCKNLIASYYCDCLPGWMGQNCD) form the EGF-like 6; calcium-binding domain. An EGF-like 7; calcium-binding domain is found at 450–485 (NINDCLGQCQNDASCRDLVNGYRCICPPGYAGDHCE). The EGF-like 8; calcium-binding domain maps to 487–523 (DIDECASNPCLNGGHCQNEINRFQCLCPTGFSGNLCQ). EGF-like domains lie at 525 to 561 (DIDY…KNCS) and 586 to 627 (DTPE…TYCH). N-linked (GlcNAc...) asparagine glycosylation occurs at Asn-559. The EGF-like 11; calcium-binding domain maps to 629–665 (NINDCESNPCKNGGTCIDGVNSYKCICSDGWEGAHCE). One can recognise an EGF-like 12; calcium-binding domain in the interval 667 to 703 (NINDCSQNPCHYGGTCRDLVNDFYCDCKNGWKGKTCH). EGF-like domains lie at 705–741 (RDSQ…TTCN) and 744–780 (RNSS…PICT). Asn-745 carries an N-linked (GlcNAc...) asparagine glycan. 9 cysteine pairs are disulfide-bonded: Cys-748-Cys-759, Cys-753-Cys-768, Cys-770-Cys-779, Cys-786-Cys-797, Cys-791-Cys-806, Cys-808-Cys-817, Cys-824-Cys-835, Cys-829-Cys-844, and Cys-846-Cys-855. Positions 782–818 (NTNDCSPHPCYNSGTCVDGDNWYRCECAPGFAGPDCR) constitute an EGF-like 15; calcium-binding domain. In terms of domain architecture, EGF-like 16; calcium-binding spans 820–856 (NINECQSSPCAFGATCVDEINGYQCICPPGHSGAKCH). N-linked (GlcNAc...) asparagine glycans are attached at residues Asn-960, Asn-991, Asn-1045, and Asn-1064. A helical membrane pass occupies residues 1068–1093 (FLVPLLSSVLTVAWVCCLVTAFYWCV). At 1094-1218 (RKRRKPSSHT…QSLNRMEYIV (125 aa)) the chain is on the cytoplasmic side. Positions 1181–1218 (REEKAPSGTPTKHPNWTNKQDNRDLESAQSLNRMEYIV) are disordered. Polar residues predominate over residues 1188–1199 (GTPTKHPNWTNK).

In terms of assembly, interacts with NOTCH1, NOTCH2 and NOTCH3. As to expression, widely expressed in many tissues, with highest expression in brain, heart, muscle and thymus.

Its subcellular location is the membrane. The protein resides in the cell membrane. Its function is as follows. Ligand for multiple Notch receptors and involved in the mediation of Notch signaling. May be involved in cell-fate decisions during hematopoiesis. Seems to be involved in early and late stages of mammalian cardiovascular development. Inhibits myoblast differentiation. May regulate fibroblast growth factor-induced angiogenesis. In Mus musculus (Mouse), this protein is Protein jagged-1 (Jag1).